Here is a 770-residue protein sequence, read N- to C-terminus: Nucleus-vacuole junction protein 2 (770 aa).

Topologically, residues 1-5 (MASLK) are cytoplasmic. A helical; Signal-anchor for type II membrane protein membrane pass occupies residues 6–26 (VFLAVYLLGGITFLPLVLFTL). The Lumenal segment spans residues 27–770 (YKIHLLYSNL…EFEEQREPKL (744 aa)). The PH domain occupies 114-266 (TALQEQILQR…WYYQLINASK (153 aa)). N-linked (GlcNAc...) asparagine glycosylation is found at asparagine 228, asparagine 263, asparagine 279, asparagine 300, asparagine 391, asparagine 528, and asparagine 529. The SMP-LTD domain maps to 304–504 (NQLTTKWLNA…YPTPNEVYRG (201 aa)). Disordered stretches follow at residues 541-566 (EGGMKTQSRIKKALRPERKKENLKDL), 578-600 (TQTTVTTATNDDVSSSENSTKSR), and 615-770 (KDNV…EPKL). The segment covering 554–566 (LRPERKKENLKDL) has biased composition (basic and acidic residues). Residues 587-596 (NDDVSSSENS) show a composition bias toward polar residues. N-linked (GlcNAc...) asparagine glycans are attached at residues asparagine 595 and asparagine 620. Phosphoserine is present on residues serine 640 and serine 669. Over residues 679–688 (LEGRKEKDTE) the composition is skewed to basic and acidic residues. Asparagine 700 carries N-linked (GlcNAc...) asparagine glycosylation. Composition is skewed to polar residues over residues 713–725 (FSVSSNDSQNSLK) and 736–751 (LESSQAFVKKTSQNRF). Position 717 is a phosphoserine (serine 717). A glycan (N-linked (GlcNAc...) asparagine) is linked at asparagine 718. Phosphoserine occurs at positions 720 and 723. Residues 756-770 (FKQDLEFEEQREPKL) show a composition bias toward basic and acidic residues.

It localises to the endoplasmic reticulum membrane. The protein resides in the nucleus membrane. Its function is as follows. During endoplasmic reticulum (ER) stress or when cellular ceramide levels increase, induces contacts between the ER and medial-Golgi complex to facilitate non-vesicular transport of ceramides from the ER to the Golgi complex where they are converted to complex sphingolipids, preventing toxic ceramide accumulation. The sequence is that of Nucleus-vacuole junction protein 2 from Saccharomyces cerevisiae (strain ATCC 204508 / S288c) (Baker's yeast).